The following is a 292-amino-acid chain: MKVIPLASESLGVRSLATYVKTKDVGILIDPGVALAPDRYGLKPNDIEFEKLREMRNKINDYAKKSNVITISHYHYDHYTPFFDDIYLESKDYAKELYKDKILLIKHPTEFINKSQMNRAKKFLESVKDIAKKIEFADNKTFKFGKTEIKFSPPFPHGRDDKLGYVLITTVKEGKFKFMHTSDTQGIIFDDIRDYIIKEKPNLILMGGPPTYLMHRYGKKNLEKTNENLKYIVENTGAELIIDHHLLRDKKFREKINVDFKTVAEFLGEKNLLLEAYRKEIKQGKDINELFG.

The protein belongs to the UPF0282 family.

This chain is UPF0282 protein MJ1629, found in Methanocaldococcus jannaschii (strain ATCC 43067 / DSM 2661 / JAL-1 / JCM 10045 / NBRC 100440) (Methanococcus jannaschii).